Here is a 416-residue protein sequence, read N- to C-terminus: 3-hydroxy-3-methylglutaryl coenzyme A reductase AN1593 (416 aa).

Glu103 (charge relay system) is an active-site residue. The N-linked (GlcNAc...) asparagine glycan is linked to Asn167. The active-site Charge relay system is Lys236. N-linked (GlcNAc...) asparagine glycosylation occurs at Asn277. The active-site Charge relay system is the Asp312. A helical membrane pass occupies residues 380–400 (LALLVAAGVLAGELSLCSALS). His408 functions as the Proton donor in the catalytic mechanism.

It belongs to the HMG-CoA reductase family.

The protein resides in the membrane. It catalyses the reaction (R)-mevalonate + 2 NADP(+) + CoA = (3S)-3-hydroxy-3-methylglutaryl-CoA + 2 NADPH + 2 H(+). Its pathway is metabolic intermediate biosynthesis; (R)-mevalonate biosynthesis; (R)-mevalonate from acetyl-CoA: step 3/3. Its function is as follows. 3-hydroxy-3-methylglutaryl coenzyme A reductase; part of the gene cluster that mediates the biosynthesis of the diterpene ent-pimara-8(14),15-diene (PD). Within the cluster, the HMG-CoA reductase AN1593 functions in the mevalonate pathway, which produces isoprenoid precursors. The geranylgeranyl pyrophosphate (GGPP) synthase AN1592 is needed in the formation of GGPP, the precursor for diterpenes. Lastly, the pimaradiene synthase pbcA performs the 2 cyclization steps that convert GGPP to ent-pimara-8(14),15-diene. The putative roles of the remaining cluster enzymes in ent-pimara-8(14),15-diene biosynthesis is unclear. The cytochrome P450 monooxygenase AN1598, the glutathione S-transferase AN1595, the oxidoreductases AN1596 and AN1597 probably function as decorative enzymes. It is possible that in biological conditions the compound is oxidized to ent-pimara-8(14),15-dien-19-oic acid, which is a bioactive diterpene compound predominant in many plant extracts. The protein is 3-hydroxy-3-methylglutaryl coenzyme A reductase AN1593 of Emericella nidulans (strain FGSC A4 / ATCC 38163 / CBS 112.46 / NRRL 194 / M139) (Aspergillus nidulans).